Here is a 282-residue protein sequence, read N- to C-terminus: (4-alkanoyl-5-oxo-2,5-dihydrofuran-3-yl)methyl phosphate reductase (282 aa).

6–11 (GATGAV) contributes to the NADP(+) binding site.

The protein belongs to the NmrA-type oxidoreductase family.

The catalysed reaction is a [(3S,4R)-4-alkanoyl-5-oxooxolan-3-yl]methyl phosphate + NADP(+) = a (4-alkanoyl-5-oxo-2,5-dihydrofuran-3-yl)methyl phosphate + NADPH + H(+). The enzyme catalyses [(3S,4R)-4-(6-methylheptanoyl)-5-oxooxolan-3-yl]methyl phosphate + NADP(+) = [4-(6-methylheptanoyl)-5-oxo-2H-furan-3-yl]methyl phosphate + NADPH + H(+). Its function is as follows. Involved in the biosynthesis of A factor (2-isocapryloyl-3R-hydroxymethyl-gamma-butyrolactone), a gamma-butyrolactone autoregulator that triggers secondary metabolism and morphogenesis in Streptomyces. Catalyzes the reduction of the butenolide phosphate produced by nonenzymatic intramolecular condensation of the 8-methyl-3-oxononanoyl-DHAP ester. The polypeptide is (4-alkanoyl-5-oxo-2,5-dihydrofuran-3-yl)methyl phosphate reductase (Streptomyces griseus subsp. griseus (strain JCM 4626 / CBS 651.72 / NBRC 13350 / KCC S-0626 / ISP 5235)).